A 1758-amino-acid chain; its full sequence is Y' element ATP-dependent helicase YIL177C (1758 aa).

The 178-residue stretch at 668 to 845 (EIYMADTPSV…LQRIGLTGLA (178 aa)) folds into the Helicase ATP-binding domain. 681–688 (APPGYGKT) contacts ATP. Residues 900–1051 (ALKLLLALFE…EFYGLESKKG (152 aa)) form the Helicase C-terminal domain. The segment covering 1142–1360 (NVRTNATTNA…ATTTESTNAS (219 aa)) has biased composition (low complexity). Residues 1142-1384 (NVRTNATTNA…RFHPVTDINK (243 aa)) are disordered. The segment covering 1361-1384 (AKEDANKDGNAEDNRFHPVTDINK) has biased composition (basic and acidic residues).

Belongs to the helicase family. Yeast subtelomeric Y' repeat subfamily.

In terms of biological role, catalyzes DNA unwinding and is involved in telomerase-independent telomere maintenance. This is Y' element ATP-dependent helicase YIL177C from Saccharomyces cerevisiae (strain ATCC 204508 / S288c) (Baker's yeast).